Reading from the N-terminus, the 590-residue chain is Negative elongation factor D (590 aa).

Residues 15-43 (FGSAAEWGDEADGGQQEDDYGEGEDDAEV) form a disordered region. A compositionally biased stretch (acidic residues) spans 21–43 (WGDEADGGQQEDDYGEGEDDAEV).

Belongs to the NELF-D family. In terms of assembly, the NELF complex is composed of NELFA, NELFB, NELFCD and NELFE; NELFA and NELFCD form a stable subcomplex that binds primarily through NELFCD to the N-terminus of NELFB. Binds RNA which may help to stabilize the NELF complex on nucleic acid. In vitro, the NELFA:NELFCD subcomplex binds to ssDNA and ssRNA in a sequence- and structure-dependent manner. Interacts with ARAF1. Interacts with PCF11. Interacts with NELFB. Interacts with KAT8.

The protein localises to the nucleus. Essential component of the NELF complex, a complex that negatively regulates the elongation of transcription by RNA polymerase II. The NELF complex, which acts via an association with the DSIF complex and causes transcriptional pausing, is counteracted by the P-TEFb kinase complex. This is Negative elongation factor D (NELFCD) from Sus scrofa (Pig).